The primary structure comprises 198 residues: Phosphoheptose isomerase (198 aa).

Residues 40–198 (IIGALRGGHK…IEAALMQDAR (159 aa)) form the SIS domain. 55-57 (NGG) provides a ligand contact to substrate. Zn(2+) is bound by residues His-64 and Glu-68. Substrate contacts are provided by residues Glu-68, 97 to 98 (ND), 123 to 125 (STS), Ser-128, and Gln-175. Zn(2+) contacts are provided by Gln-175 and His-183.

Belongs to the SIS family. GmhA subfamily. As to quaternary structure, homotetramer. Zn(2+) is required as a cofactor.

It localises to the cytoplasm. The enzyme catalyses 2 D-sedoheptulose 7-phosphate = D-glycero-alpha-D-manno-heptose 7-phosphate + D-glycero-beta-D-manno-heptose 7-phosphate. The protein operates within carbohydrate biosynthesis; D-glycero-D-manno-heptose 7-phosphate biosynthesis; D-glycero-alpha-D-manno-heptose 7-phosphate and D-glycero-beta-D-manno-heptose 7-phosphate from sedoheptulose 7-phosphate: step 1/1. Functionally, catalyzes the isomerization of sedoheptulose 7-phosphate in D-glycero-D-manno-heptose 7-phosphate. The polypeptide is Phosphoheptose isomerase (Bradyrhizobium sp. (strain ORS 278)).